A 356-amino-acid polypeptide reads, in one-letter code: Carminomycin 4-O-methyltransferase DnrK (356 aa).

Arginine 153 is an S-adenosyl-L-methionine binding site. Aspartate 163 lines the substrate pocket. Residues glycine 187, glutamate 210, 237–238, and serine 252 contribute to the S-adenosyl-L-methionine site; that span reads DF. Residues asparagine 257 and arginine 303 each contribute to the substrate site.

The protein belongs to the class I-like SAM-binding methyltransferase superfamily. Cation-independent O-methyltransferase family. Homodimer and homotetramer in equilibrium.

The catalysed reaction is carminomycin + S-adenosyl-L-methionine = daunorubicin + S-adenosyl-L-homocysteine + H(+). It functions in the pathway antibiotic biosynthesis; daunorubicin biosynthesis. It participates in antibiotic biosynthesis; carminomycin biosynthesis. In terms of biological role, involved in the biosynthesis of the anthracyclines carminomycin and daunorubicin (daunomycin) which are aromatic polyketide antibiotics that exhibit high cytotoxicity and are widely applied in the chemotherapy of a variety of cancers. In vivo, catalyzes the transfer of a methyl group from S-adenosyl-L-methionine to the 4-O-position of carminomycin to form daunorubicin. In vitro, it also methylates the anthracyclines rhodomycin D (10-carbomethoxy-13-deoxycarminomycin) and 13-deoxy-carminomycin at the 4-hydroxyl position. It is quite specific with respect to the length of the carbohydrate chain at the C7 position, but it can accept substrates with bulky substituent at C10 position. The chain is Carminomycin 4-O-methyltransferase DnrK (dnrK) from Streptomyces peucetius.